The sequence spans 515 residues: Histidine ammonia-lyase (515 aa).

The 5-imidazolinone (Ala-Gly) cross-link spans 148–150; it reads ASG. Ser-149 is modified (2,3-didehydroalanine (Ser)).

This sequence belongs to the PAL/histidase family. In terms of processing, contains an active site 4-methylidene-imidazol-5-one (MIO), which is formed autocatalytically by cyclization and dehydration of residues Ala-Ser-Gly.

The protein localises to the cytoplasm. It catalyses the reaction L-histidine = trans-urocanate + NH4(+). Its pathway is amino-acid degradation; L-histidine degradation into L-glutamate; N-formimidoyl-L-glutamate from L-histidine: step 1/3. The protein is Histidine ammonia-lyase of Pseudomonas syringae pv. tomato (strain ATCC BAA-871 / DC3000).